We begin with the raw amino-acid sequence, 409 residues long: Cdc42 effector protein 1 (409 aa).

Residues 1-29 are disordered; it reads MPGPQGGTGAPTMSLGKLSPVGWVSSSHG. Residues Ser19 and Ser27 each carry the phosphoserine modification. Thr34 is modified (phosphothreonine). The region spanning 38–52 is the CRIB domain; sequence ISPPLGDFRHTMHVG. The residue at position 39 (Ser39) is a Phosphoserine. Position 53 is an omega-N-methylarginine (Arg53). A phosphoserine mark is found at Ser65, Ser77, Ser101, Ser113, Ser121, and Ser139. Residues 167-189 are compositionally biased toward basic and acidic residues; it reads PRVEKHSNRDRDRDPDHSQDREQ. Residues 167–203 are disordered; that stretch reads PRVEKHSNRDRDRDPDHSQDREQSSFPSEPTPNPELR. Phosphoserine is present on residues Ser191, Ser205, Ser207, and Ser210. 3 tandem repeats follow at residues 235–241, 242–248, and 255–261. The interval 235 to 284 is 3 X 7 AA tandem repeats of [PT]-[AT]-A-[ENT]-[PT]-[PTS]-[AG]; the sequence is PAAETPVPTANPPAPAANPAPTAKPPAHAITTLDAVTSLPASAVTSLPAP. 2 disordered regions span residues 237–260 and 282–329; these read AETPVPTANPPAPAANPAPTAKPP and PAPA…FDRH. The segment covering 243 to 258 has biased composition (pro residues); sequence TANPPAPAANPAPTAK. Residues 282-291 show a composition bias toward low complexity; it reads PAPAAASSPS. 4 positions are modified to phosphoserine: Ser312, Ser332, Ser368, and Ser371.

Belongs to the BORG/CEP family. As to quaternary structure, interacts with RHOQ and CDC42, in a GTP-dependent manner.

It is found in the endomembrane system. Its subcellular location is the cytoplasm. It localises to the cytoskeleton. Functionally, probably involved in the organization of the actin cytoskeleton. Induced membrane extensions in fibroblasts. The polypeptide is Cdc42 effector protein 1 (Cdc42ep1) (Mus musculus (Mouse)).